The sequence spans 312 residues: Non-structural protein 12A (312 aa).

The segment covering 1-23 has biased composition (low complexity); the sequence is MFKSGSGSLKRSGSISSVKSFSG. Disordered regions lie at residues 1 to 37, 63 to 97, and 114 to 162; these read MFKS…RGSV, VPEK…YNQN, and KGRG…TGDG. Positions 63 to 73 are enriched in basic and acidic residues; the sequence is VPEKTKSEGNL. Residues 74–97 are compositionally biased toward polar residues; it reads KNKSSVITGNFESSGPTNAHYNQN. A compositionally biased stretch (basic and acidic residues) spans 122-134; the sequence is DARHTATDSRLSQ.

It belongs to the phytoreovirus non-structural protein Pns12A family.

It is found in the host cytoplasm. Functionally, constituent of viral factories. In Rice dwarf virus (isolate Fujian) (RDV), this protein is Non-structural protein 12A.